The primary structure comprises 171 residues: ATP synthase subunit b (171 aa).

The chain crosses the membrane as a helical span at residues 26-48 (LINLAIIIGLLVYAGRGFLGNLL).

The protein belongs to the ATPase B chain family. F-type ATPases have 2 components, F(1) - the catalytic core - and F(0) - the membrane proton channel. F(1) has five subunits: alpha(3), beta(3), gamma(1), delta(1), epsilon(1). F(0) has four main subunits: a(1), b(1), b'(1) and c(10-14). The alpha and beta chains form an alternating ring which encloses part of the gamma chain. F(1) is attached to F(0) by a central stalk formed by the gamma and epsilon chains, while a peripheral stalk is formed by the delta, b and b' chains.

It is found in the cellular thylakoid membrane. In terms of biological role, f(1)F(0) ATP synthase produces ATP from ADP in the presence of a proton or sodium gradient. F-type ATPases consist of two structural domains, F(1) containing the extramembraneous catalytic core and F(0) containing the membrane proton channel, linked together by a central stalk and a peripheral stalk. During catalysis, ATP synthesis in the catalytic domain of F(1) is coupled via a rotary mechanism of the central stalk subunits to proton translocation. Functionally, component of the F(0) channel, it forms part of the peripheral stalk, linking F(1) to F(0). The sequence is that of ATP synthase subunit b from Synechococcus elongatus (strain ATCC 33912 / PCC 7942 / FACHB-805) (Anacystis nidulans R2).